Consider the following 1183-residue polypeptide: Peroxisomal ATPase PEX6 (1183 aa).

Positions 161 to 205 (ESRGKKTGEPEDGPLANGIDLNGVDDSDSDEDVLSQGDDDDENNV) are disordered. Over residues 183–204 (GVDDSDSDEDVLSQGDDDDENN) the composition is skewed to acidic residues. The interval 576-785 (LPNNYISPVH…VERAMTACSE (210 aa)) is AAA-cassette D1. The segment at 878-1070 (GILFYGPPGT…CSDAMLKAIT (193 aa)) is AAA-cassette D2. Residue 883-890 (GPPGTGKT) participates in ATP binding. The interval 1160–1183 (IMVDGPGTGGEGAFGDDGDEEGLY) is disordered. The segment covering 1173-1183 (FGDDGDEEGLY) has biased composition (acidic residues).

This sequence belongs to the AAA ATPase family. In terms of assembly, interacts with PEX1; forming the PEX1-PEX6 AAA ATPase complex, which is composed of a heterohexamer formed by a trimer of PEX1-PEX6 dimers.

The protein localises to the cytoplasm. Its subcellular location is the cytosol. It is found in the peroxisome membrane. It carries out the reaction ATP + H2O = ADP + phosphate + H(+). Its function is as follows. Component of the PEX1-PEX6 AAA ATPase complex, a protein dislocase complex that mediates the ATP-dependent extraction of the PEX5 receptor from peroxisomal membranes, an essential step for PEX5 recycling. Specifically recognizes PEX5 monoubiquitinated at 'Cys-6', and pulls it out of the peroxisome lumen through the PEX2-PEX10-PEX12 retrotranslocation channel. Extraction by the PEX1-PEX6 AAA ATPase complex is accompanied by unfolding of the TPR repeats and release of bound cargo from PEX5. Regulates autophagy and biogenesis of peroxisomes and Woronin bodies. Plays important roles in mycelial growth and development and stress response. Is also essential for conidiation and fatty acid utilization. Required for nematode predation via trap formation. This chain is Peroxisomal ATPase PEX6, found in Arthrobotrys oligospora (strain ATCC 24927 / CBS 115.81 / DSM 1491) (Nematode-trapping fungus).